A 520-amino-acid chain; its full sequence is Zinc finger and BTB domain-containing protein 18 (520 aa).

Residues 24–91 (CDCTVLVGDA…MYEGILQFKG (68 aa)) form the BTB domain. The disordered stretch occupies residues 121–140 (ATTDSTKKEEDTSSFSDKVE). 4 C2H2-type zinc fingers span residues 368–390 (FMCPLCNKVFPSPHILQIHLSTH), 408–430 (PTCSLCGKTFSCMYTLKRHERTH), 436–458 (YTCTQCGKSFQYSHNLSRHAVVH), and 464–487 (HACKWCERRFTQSGDLYRHIRKFH).

It belongs to the krueppel C2H2-type zinc-finger protein family. ZBTB18 subfamily.

It is found in the nucleus. Transcriptional repressor that plays a role in various developmental processes. Specifically binds the consensus DNA sequence 5'-[AC]ACATCTG[GT][AC]-3' which contains the E box core, and acts by recruiting chromatin remodeling multiprotein complexes. The polypeptide is Zinc finger and BTB domain-containing protein 18 (zbtb18) (Xenopus laevis (African clawed frog)).